The sequence spans 734 residues: 5-methyltetrahydropteroyltriglutamate--homocysteine methyltransferase (734 aa).

5-methyltetrahydropteroyltri-L-glutamate is bound by residues 15–18 (REFK) and K104. L-homocysteine is bound by residues 409–411 (IGS) and E462. Residues 409 to 411 (IGS) and E462 each bind L-methionine. 5-methyltetrahydropteroyltri-L-glutamate contacts are provided by residues 493–494 (RC) and W539. D577 lines the L-homocysteine pocket. D577 provides a ligand contact to L-methionine. E583 is a 5-methyltetrahydropteroyltri-L-glutamate binding site. Residues H618, C620, and E642 each contribute to the Zn(2+) site. Residue H672 is the Proton donor of the active site. C704 is a Zn(2+) binding site.

It belongs to the vitamin-B12 independent methionine synthase family. Zn(2+) is required as a cofactor.

The catalysed reaction is 5-methyltetrahydropteroyltri-L-glutamate + L-homocysteine = tetrahydropteroyltri-L-glutamate + L-methionine. It participates in amino-acid biosynthesis; L-methionine biosynthesis via de novo pathway; L-methionine from L-homocysteine (MetE route): step 1/1. Its function is as follows. Catalyzes the transfer of a methyl group from 5-methyltetrahydrofolate to homocysteine resulting in methionine formation. The chain is 5-methyltetrahydropteroyltriglutamate--homocysteine methyltransferase from Thermotoga maritima (strain ATCC 43589 / DSM 3109 / JCM 10099 / NBRC 100826 / MSB8).